We begin with the raw amino-acid sequence, 189 residues long: Rho-related protein racM (189 aa).

G12–T19 serves as a coordination point for GTP. The short motif at Y35–F43 is the Effector region element. GTP is bound by residues D60 to G64 and T118 to D121. At C186 the chain carries Cysteine methyl ester. C186 carries S-geranylgeranyl cysteine lipidation. The propeptide at I187 to L189 is removed in mature form.

It belongs to the small GTPase superfamily. Rho family.

It localises to the cell membrane. This chain is Rho-related protein racM (racM), found in Dictyostelium discoideum (Social amoeba).